Consider the following 20-residue polypeptide: SDNSVVLRYGDGEYSYPVVD.

It belongs to the citrate synthase family. Homohexamer.

It carries out the reaction oxaloacetate + acetyl-CoA + H2O = citrate + CoA + H(+). It participates in carbohydrate metabolism; tricarboxylic acid cycle; isocitrate from oxaloacetate: step 1/2. Its activity is regulated as follows. Allosterically inhibited by NADH. This Streptomyces hygroscopicus protein is Citrate synthase (gltA).